Consider the following 253-residue polypeptide: Ribosome-inactivating protein saporin-5 (253 aa).

Glu-176 is a catalytic residue.

The protein belongs to the ribosome-inactivating protein family. Type 1 RIP subfamily.

It catalyses the reaction Endohydrolysis of the N-glycosidic bond at one specific adenosine on the 28S rRNA.. In terms of biological role, ribosome-inactivating protein of type 1, inhibits protein synthesis in animal cells. The sequence is that of Ribosome-inactivating protein saporin-5 (SAP5) from Saponaria officinalis (Common soapwort).